A 506-amino-acid chain; its full sequence is Cytochrome P450 monooxygenase atr2 (506 aa).

Residues 18–38 form a helical membrane-spanning segment; sequence VFAGLVLASLLTTTYCIWNIF. C451 contacts heme.

It belongs to the cytochrome P450 family. Heme is required as a cofactor.

It localises to the membrane. It catalyses the reaction 4-O-demethylbarbatate + reduced [NADPH--hemoprotein reductase] + O2 = proatranorin II + oxidized [NADPH--hemoprotein reductase] + H2O + H(+). It carries out the reaction proatranorin II + reduced [NADPH--hemoprotein reductase] + O2 = proatranorin III + oxidized [NADPH--hemoprotein reductase] + 2 H2O + H(+). The enzyme catalyses proatranorin I + reduced [NADPH--hemoprotein reductase] + O2 = proatranorin IV + oxidized [NADPH--hemoprotein reductase] + H2O + H(+). The catalysed reaction is proatranorin IV + reduced [NADPH--hemoprotein reductase] + O2 = atranorin + oxidized [NADPH--hemoprotein reductase] + 2 H2O + H(+). It functions in the pathway secondary metabolite biosynthesis; terpenoid biosynthesis. In terms of biological role, cytochrome P450 monooxygenase; part of the gene cluster that mediates the biosynthesis of atranorin, a depside of polyketide origin that accumulates in the cortical or medullary layers of lichen thalli. Atr2 performs the oxidation at the C-9 position of 4-O-demethylbarbatic acid to yield proatranorin III via proatranorin II. Atr2 is also able to oxidize the atr3 product proatranorin I to produce the final compound atranorin. The first step in the pathway is performed by the non-reducing polyketide synthase atr1 that produces 4-O-demethylbarbatic acid composed of two 3-methylorsellinic acid (3MOA) moieties. The pathway continues with the actions of the cytochrome P450 monooygenase atr2 that catalizes the oxidation of c-9 and the O-methyltransferase atr3 that performs the methylation of the carboxyl group to yield atranorin, via the proatranorin II and III intermediates if atr2 acts first, or the proatranorin I intermediate if atr3 acts first. This chain is Cytochrome P450 monooxygenase atr2, found in Stereocaulon alpinum (Alpine snow lichen).